The chain runs to 538 residues: Bifunctional purine biosynthesis protein PurH (538 aa).

The region spanning 8–158 is the MGS-like domain; the sequence is FPIPDLHRVR…KNHVYTGVIT (151 aa).

The protein belongs to the PurH family.

The enzyme catalyses (6R)-10-formyltetrahydrofolate + 5-amino-1-(5-phospho-beta-D-ribosyl)imidazole-4-carboxamide = 5-formamido-1-(5-phospho-D-ribosyl)imidazole-4-carboxamide + (6S)-5,6,7,8-tetrahydrofolate. The catalysed reaction is IMP + H2O = 5-formamido-1-(5-phospho-D-ribosyl)imidazole-4-carboxamide. The protein operates within purine metabolism; IMP biosynthesis via de novo pathway; 5-formamido-1-(5-phospho-D-ribosyl)imidazole-4-carboxamide from 5-amino-1-(5-phospho-D-ribosyl)imidazole-4-carboxamide (10-formyl THF route): step 1/1. It participates in purine metabolism; IMP biosynthesis via de novo pathway; IMP from 5-formamido-1-(5-phospho-D-ribosyl)imidazole-4-carboxamide: step 1/1. In Bartonella henselae (strain ATCC 49882 / DSM 28221 / CCUG 30454 / Houston 1) (Rochalimaea henselae), this protein is Bifunctional purine biosynthesis protein PurH.